A 218-amino-acid chain; its full sequence is DNA replication complex GINS protein psf3 (218 aa).

Gly residues predominate over residues 147–163 (GGGSSYHGRDGGGAGGK). Positions 147–182 (GGGSSYHGRDGGGAGGKGKGKATKDDNASNLGVGGA) are disordered.

This sequence belongs to the GINS3/PSF3 family. As to quaternary structure, component of the GINS complex which is a heterotetramer of div-26/sld5, drc-1/psf1, drc-2/psf2 and drc-3/psf3.

It localises to the nucleus. The GINS complex plays an essential role in the initiation of DNA replication. The chain is DNA replication complex GINS protein psf3 (drc-3) from Neurospora crassa (strain ATCC 24698 / 74-OR23-1A / CBS 708.71 / DSM 1257 / FGSC 987).